A 268-amino-acid chain; its full sequence is Microtubule-associated protein RP/EB family member 1 (268 aa).

At A2 the chain carries N-acetylalanine. In terms of domain architecture, Calponin-homology (CH) spans 14-116 (NLSRHDMLAW…FVQWFKKFFD (103 aa)). N6-crotonyllysine is present on K66. Y124 bears the Phosphotyrosine mark. The interaction with MTUS2/TIP150 stretch occupies residues 124–268 (YDPVAARQGQ…GGPQEEQEEY (145 aa)). The interval 146–191 (LSKPKKPLGSGSAAPQRPIATQRTTAAPKAGPGMVRKNPGMGNGDD) is disordered. A Phosphoserine modification is found at S155. One can recognise an EB1 C-terminal domain in the interval 185–255 (GMGNGDDEAA…LYATDEGFVI (71 aa)). The interval 206 to 211 (TVEDLE) is interaction with APC. Residues 208–268 (EDLEKERDFY…GGPQEEQEEY (61 aa)) are DCTN1-binding. At K220 the chain carries N6-acetyllysine. An APC-binding region spans residues 220–242 (KLRNIELICQENEGENDPVLQRI). The segment at 232-255 (EGENDPVLQRIVDILYATDEGFVI) is interaction with SKA1.

The protein belongs to the MAPRE family. In terms of assembly, homodimer. Heterodimer with MAPRE3. Interacts with DCTN1, DCTN2, TERF1 and dynein intermediate chain. Interaction with DIAPH1 and DIAPH2. Interacts (via C-terminal residues 206-211) with APC (via C-terminal residues 2674-2845); the interaction inhibits association with and bundling of F-actin. Interacts with CLASP2, DST, KIF2C and STIM1; probably required for their targeting to the growing microtubule plus ends. Interacts with MTUS2; interaction is direct and probably targets MTUS2 to microtubules. Interacts (via C-terminus) with SKA1 (via SXIP motif); the interaction is direct and stabilizes the kinetochore-microtubule attachment of the SKA1 complex. Interacts with APC2. Interacts with CLASP1. Interacts with CDK5RAP2. According to another report, MAPRE1 does not interact with CDK5RAP2. Interacts with MACF1. Interacts with RABL2/RABL2A; binds preferentially to GTP-bound RABL2. Interacts with KCNAB2. Interacts (via C-terminus) with CLIP1. Interacts with SLAIN2 and SLAIN1. Interacts with KIF18B; this interaction is required for efficient accumulation of KIF18B at microtubule plus ends. Interacts with MISP. Interacts with KNSTRN. Interacts with NCKAP5L. Interacts with AKAP9. Interacts with PDE4DIP; this interaction, which is PDE4DIP isoform-specific, is required for its recruitment to the Golgi apparatus. Interacts with CAMSAP2. May form a pericentrosomal complex with AKAP9, CDK5RAP2 and PDE4DIP isoform 2/MMG8/SMYLE; within this complex, MAPRE1 binding to CDK5RAP2 may be mediated by PDE4DIP. Contrary to other mammalian species, does not interact with CDK5RAP2, possibly due to the lack of conservation of the MAPRE1-binding motif in rat CDK5RAP2. Interacts with AKNA. Interacts with GAS2L1, GAS2L2, and GAS2L3. Interacts with RARRES1 and AGBL2. Post-translationally, acetylation at Lys-220 by KAT2B/PCAF promotes dynamic kinetochore-microtubule interactions in early mitosis. Crotonylated by KAT5 during mitosis, promoting astral microtubule plasticity and dynamic connection between astral microtubules and the cortex during mitotic chromosome segregation, thereby ensuring accurate spindle positioning in mitosis. Decrotonylated by HDAC3.

The protein resides in the cytoplasm. The protein localises to the cytoskeleton. It localises to the microtubule organizing center. Its subcellular location is the centrosome. It is found in the golgi apparatus. The protein resides in the spindle. The protein localises to the spindle pole. In terms of biological role, plus-end tracking protein (+TIP) that binds to the plus-end of microtubules and regulates the dynamics of the microtubule cytoskeleton. Recruits other +TIP proteins to microtubules by binding to a conserved Ser-X-Leu-Pro (SXLP) motif in their polypeptide chains. Promotes cytoplasmic microtubule nucleation and elongation. Involved in mitotic spindle positioning by stabilizing microtubules and promoting dynamic connection between astral microtubules and the cortex during mitotic chromosome segregation. Assists chromosome alignment in metaphase by recruiting the SKA complex to the spindle and stabilizing its interactions with microtubule bundles (K-fibers). Also acts as a regulator of minus-end microtubule organization: interacts with the complex formed by AKAP9 and PDE4DIP, leading to recruit CAMSAP2 to the Golgi apparatus, thereby tethering non-centrosomal minus-end microtubules to the Golgi, an important step for polarized cell movement. Promotes elongation of CAMSAP2-decorated microtubule stretches on the minus-end of microtubules. Acts as a regulator of autophagosome transport via interaction with CAMSAP2. Functions downstream of Rho GTPases and DIAPH1 in stable microtubule formation. May play a role in cell migration. The chain is Microtubule-associated protein RP/EB family member 1 (Mapre1) from Rattus norvegicus (Rat).